Here is a 316-residue protein sequence, read N- to C-terminus: Glycerol-3-phosphate dehydrogenase [NAD(P)+] (316 aa).

Positions 14, 15, 35, and 109 each coordinate NADPH. Positions 109 and 137 each coordinate sn-glycerol 3-phosphate. Ala-141 is a binding site for NADPH. Sn-glycerol 3-phosphate-binding residues include Lys-192, Asp-248, Ser-258, Arg-259, and Asn-260. Lys-192 acts as the Proton acceptor in catalysis. Arg-259 provides a ligand contact to NADPH. NADPH-binding residues include Leu-283 and Glu-285.

This sequence belongs to the NAD-dependent glycerol-3-phosphate dehydrogenase family.

Its subcellular location is the cytoplasm. It carries out the reaction sn-glycerol 3-phosphate + NAD(+) = dihydroxyacetone phosphate + NADH + H(+). The enzyme catalyses sn-glycerol 3-phosphate + NADP(+) = dihydroxyacetone phosphate + NADPH + H(+). The protein operates within membrane lipid metabolism; glycerophospholipid metabolism. Catalyzes the reduction of the glycolytic intermediate dihydroxyacetone phosphate (DHAP) to sn-glycerol 3-phosphate (G3P), the key precursor for phospholipid synthesis. The polypeptide is Glycerol-3-phosphate dehydrogenase [NAD(P)+] (Rickettsia prowazekii (strain Madrid E)).